A 286-amino-acid polypeptide reads, in one-letter code: Ribosome-inactivating protein momordin II (286 aa).

A signal peptide spans 1–23 (MVKCLLLSFLIIAIFIGVPTAKG). Residue Glu-181 is part of the active site.

It belongs to the ribosome-inactivating protein family. Type 1 RIP subfamily.

The catalysed reaction is Endohydrolysis of the N-glycosidic bond at one specific adenosine on the 28S rRNA.. The polypeptide is Ribosome-inactivating protein momordin II (Momordica balsamina (Bitter gourd)).